The sequence spans 321 residues: Gap junction delta-2 protein (321 aa).

At 1-19 the chain is on the cytoplasmic side; that stretch reads MGEWTILERLLEAAVQQHS. A helical membrane pass occupies residues 20-42; that stretch reads TMIGRILLTVVVIFRILIVAIVG. The Extracellular segment spans residues 43-75; sequence ETVYDDEQTMFVCNTLQPGCNQACYDRAFPISH. Residues 76 to 98 form a helical membrane-spanning segment; sequence IRYWVFQIIMVCTPSLCFITYSV. At 99 to 197 the chain is on the cytoplasmic side; the sequence is HQSAKQRERR…KLRRQEGISR (99 aa). Positions 120–141 are disordered; that stretch reads PAESIGGPGGTGGGGSGGSKRE. Over residues 125–137 the composition is skewed to gly residues; it reads GGPGGTGGGGSGG. A helical transmembrane segment spans residues 198-220; sequence FYIIQVVFRNALEIGFLVGQYFL. The Extracellular portion of the chain corresponds to 221–252; it reads YGFSVPGLYECNRYPCIKEVECYVSRPTEKTV. The helical transmembrane segment at 253–275 threads the bilayer; that stretch reads FLVFMFAVSGICVVLNLAELNHL. Topologically, residues 276–321 are cytoplasmic; sequence GWRKIKLAVRGAQAKRKSVYEIRNKDLPRVSVPNFGRTQSSDSAYV.

Belongs to the connexin family. Delta-type subfamily. In terms of assembly, a connexon is composed of a hexamer of connexins. Highly expressed in neurons.

The protein localises to the cell membrane. Its subcellular location is the cell junction. The protein resides in the gap junction. In terms of biological role, one gap junction consists of a cluster of closely packed pairs of transmembrane channels, the connexons, through which materials of low MW diffuse from one cell to a neighboring cell. This Mus musculus (Mouse) protein is Gap junction delta-2 protein (Gjd2).